The sequence spans 480 residues: Plant UBX domain-containing protein 10 (480 aa).

Disordered regions lie at residues D47–I78 and A335–V383. Residues R330–K389 are a coiled coil. Residues D336 to V383 are compositionally biased toward basic and acidic residues. The 79-residue stretch at K399 to I477 folds into the UBX domain.

This chain is Plant UBX domain-containing protein 10, found in Arabidopsis thaliana (Mouse-ear cress).